A 282-amino-acid polypeptide reads, in one-letter code: uncharacterized protein (282 aa).

Residues Leu205 to Ala277 adopt a coiled-coil conformation.

This is an uncharacterized protein from Treponema pallidum (strain Nichols).